We begin with the raw amino-acid sequence, 428 residues long: Immunoglobulin superfamily member 11 (428 aa).

The first 22 residues, 1–22, serve as a signal peptide directing secretion; the sequence is MTRRRSAPASWLLVSLLGVATS. An Ig-like V-type domain is found at 23 to 136; the sequence is LEVSESPGSV…DRGGRNIGVT (114 aa). Residues 23-240 are Extracellular-facing; the sequence is LEVSESPGSV…QVISPQPRSV (218 aa). Intrachain disulfides connect C44–C120 and C165–C215. An N-linked (GlcNAc...) asparagine glycan is attached at N102. One can recognise an Ig-like C2-type domain in the interval 144–234; the sequence is PSAPQCQIQG…TCLLDLQVIS (91 aa). Residues 241-261 form a helical membrane-spanning segment; the sequence is GVIAGAVGTGAVLIVICLALI. The Cytoplasmic portion of the chain corresponds to 262–428; it reads SGAFFYWRSK…PAQSRAGSLV (167 aa). R375 is subject to Omega-N-methylarginine. Residues 376-389 are compositionally biased toward polar residues; that stretch reads GSSPQVLPRNNGSV. Residues 376–396 are disordered; the sequence is GSSPQVLPRNNGSVSRKPWPQ.

Post-translationally, N-glycosylated. Highly expressed in testis and detected in kidney and adrenal gland. In brain, expressed in commissure fibers of the corpus callosum and pyramidal cell layers of the dentate gyrus and hippocampus where it is probably expressed by both neurons and glial cells.

The protein localises to the cell membrane. In terms of biological role, functions as a cell adhesion molecule through homophilic interaction. Stimulates cell growth. This Mus musculus (Mouse) protein is Immunoglobulin superfamily member 11 (Igsf11).